An 861-amino-acid polypeptide reads, in one-letter code: MSDVQTLEYKGKVVQFAPENPREAEIPADELHEHLQNPSTERTRRLKARCRWKHAAAGEFCEKGVTAGIERMRLLTESHWATRGEPEPIRRAHGLKNILDKSTLVLQTDEFIVGYHAEDPNMFPLYPELSYMAVQDYLKSKYSPQPAKEAQEIVDYWKPFSLQARCEPYFDPVDLHRGYQVSTIEGPVFATGYNSVIPPYETVLEDGLQARIALAEEKIEHARAEMEKFPWHAPSGLEWIDKIDNWKAMVIACKAVIAWARRHARLCKIVAEHFETDPKRKAELLEIADICQRMPAEPARGLKDAMQSKWFTFLICHAIERYASGFAQKEDSLLWPYYKASVIDKTFQPMEHKDAVELIEMERLKVSEHGAGKSRAYREIFPGSNDLFILTLGGTNGDGSDACNDMTDAILEATKRIRTTEPSIVFRYSKKNRAKTLRWVFECIRDGLGYPSIKHNELGVQQMLEMAKYSRNGNGATPEEAHYWVNVLCMAPGLAGRRKAQKTRSEGGSAIFPAKLLEITLNNGYDWSYADMQMGPETGYAKDFATFDQLWEAFRKQYQYAIALAIRCKDVSRTMECRFLQMPFVSALDDGCMELGMDANALSEQPNGWHNPITSIVAGNSLVAIKKLIYDEKKYTMAQLMDALQANWEGYEEMRRDFKNAPKWGNDDDDADVLISRFYEEILGGEMMKNINYSGGPVKPTGQAVGLYMEVGSRTGPTPDGRFGGEAADDGGISPYSGTDKKGPTAVLRSVSKVQKNQKANLLNQRLSVPIMRSKHGFDIWHAYMDTWHDLNIDHVQFNVVSTEEMKAAQREPEKHQDLIVRVSGFSARFVDIPTYGQNTIIARNEQNFNAQDLEFLNVEL.

The PFL domain occupies 40 to 712 (TERTRRLKAR…QAVGLYMEVG (673 aa)). Residues 718–744 (TPDGRFGGEAADDGGISPYSGTDKKGP) form a disordered region. Positions 731 to 850 (GGISPYSGTD…IIARNEQNFN (120 aa)) constitute a Glycine radical domain. G825 carries the post-translational modification Glycine radical.

The protein belongs to the glycyl radical enzyme (GRE) family. BSS subfamily. In terms of assembly, heterohexamer composed of 2 alpha subunits, 2 beta subunits and 2 gamma subunits.

It carries out the reaction toluene + fumarate = 2-benzylsuccinate. It functions in the pathway xenobiotic degradation; toluene degradation. With respect to regulation, activated by the benzylsuccinate synthase activating enzyme BssD. Rapidly inactivated by oxygen. Catalyzes the addition of fumarate to the methyl group of toluene, leading to the formation of benzylsuccinate. The protein is Benzylsuccinate synthase alpha subunit (bssA) of Thauera aromatica.